The following is a 383-amino-acid chain: Homeobox protein knotted-1-like 5 (383 aa).

Disordered regions lie at residues 1–35 (MSFN…HFSE) and 52–73 (TTAD…ADTN). Residues 281-301 (ELKHELKQGFKEKIVDIREEI) form the ELK domain. The homeobox; TALE-type DNA-binding region spans 302–365 (MRKRRAGKLP…NQRKRNWNSN (64 aa)). The interval 361 to 383 (NWNSNSSTSSTLTKNKRKRTGKS) is disordered. Residues 362-373 (WNSNSSTSSTLT) show a composition bias toward low complexity. Over residues 374–383 (KNKRKRTGKS) the composition is skewed to basic residues.

It belongs to the TALE/KNOX homeobox family. As to quaternary structure, may form heterodimeric complex with the TALE/BELL protein BEL1, BLH1 and BLH2. Interacts with OFP1, OFP2, OFP3 and OFP4.

It localises to the nucleus. The polypeptide is Homeobox protein knotted-1-like 5 (KNAT5) (Arabidopsis thaliana (Mouse-ear cress)).